The sequence spans 474 residues: Bifunctional protein GlmU (474 aa).

A pyrophosphorylase region spans residues 1–232 (MSALDVIIMA…ALQVAGVNSP (232 aa)). Residues Lys-23, Gln-78, 83 to 84 (GT), 105 to 107 (SGD), Gly-142, Glu-157, and Asn-230 contribute to the UDP-N-acetyl-alpha-D-glucosamine site. Mg(2+) is bound at residue Asp-107. Asn-230 contacts Mg(2+). Positions 233 to 253 (LQLAELERAHQLAQARALMEQ) are linker. The segment at 254-474 (GVRLADPARF…WQRPAKLPKA (221 aa)) is N-acetyltransferase. Positions 349 and 367 each coordinate UDP-N-acetyl-alpha-D-glucosamine. Catalysis depends on His-379, which acts as the Proton acceptor. The UDP-N-acetyl-alpha-D-glucosamine site is built by Tyr-382 and Asn-393. Acetyl-CoA contacts are provided by residues Ala-396, 402 to 403 (NY), Ser-421, Gly-439, and Arg-456. Positions 454–474 (VARGKQVTKENWQRPAKLPKA) are disordered.

The protein in the N-terminal section; belongs to the N-acetylglucosamine-1-phosphate uridyltransferase family. It in the C-terminal section; belongs to the transferase hexapeptide repeat family. In terms of assembly, homotrimer. It depends on Mg(2+) as a cofactor.

It localises to the cytoplasm. It carries out the reaction alpha-D-glucosamine 1-phosphate + acetyl-CoA = N-acetyl-alpha-D-glucosamine 1-phosphate + CoA + H(+). The catalysed reaction is N-acetyl-alpha-D-glucosamine 1-phosphate + UTP + H(+) = UDP-N-acetyl-alpha-D-glucosamine + diphosphate. Its pathway is nucleotide-sugar biosynthesis; UDP-N-acetyl-alpha-D-glucosamine biosynthesis; N-acetyl-alpha-D-glucosamine 1-phosphate from alpha-D-glucosamine 6-phosphate (route II): step 2/2. It participates in nucleotide-sugar biosynthesis; UDP-N-acetyl-alpha-D-glucosamine biosynthesis; UDP-N-acetyl-alpha-D-glucosamine from N-acetyl-alpha-D-glucosamine 1-phosphate: step 1/1. The protein operates within bacterial outer membrane biogenesis; LPS lipid A biosynthesis. Its function is as follows. Catalyzes the last two sequential reactions in the de novo biosynthetic pathway for UDP-N-acetylglucosamine (UDP-GlcNAc). The C-terminal domain catalyzes the transfer of acetyl group from acetyl coenzyme A to glucosamine-1-phosphate (GlcN-1-P) to produce N-acetylglucosamine-1-phosphate (GlcNAc-1-P), which is converted into UDP-GlcNAc by the transfer of uridine 5-monophosphate (from uridine 5-triphosphate), a reaction catalyzed by the N-terminal domain. In Paracidovorax citrulli (strain AAC00-1) (Acidovorax citrulli), this protein is Bifunctional protein GlmU.